A 230-amino-acid polypeptide reads, in one-letter code: Orotidine 5'-phosphate decarboxylase (230 aa).

Residues Asp8, Lys32, 59 to 68 (DLKLYDIPNT), Thr118, Arg178, Gln187, Gly207, and Arg208 each bind substrate. Catalysis depends on Lys61, which acts as the Proton donor.

It belongs to the OMP decarboxylase family. Type 1 subfamily. Homodimer.

The catalysed reaction is orotidine 5'-phosphate + H(+) = UMP + CO2. It participates in pyrimidine metabolism; UMP biosynthesis via de novo pathway; UMP from orotate: step 2/2. Its function is as follows. Catalyzes the decarboxylation of orotidine 5'-monophosphate (OMP) to uridine 5'-monophosphate (UMP). In Nautilia profundicola (strain ATCC BAA-1463 / DSM 18972 / AmH), this protein is Orotidine 5'-phosphate decarboxylase.